We begin with the raw amino-acid sequence, 400 residues long: PHD finger protein 24 (400 aa).

G2 is lipidated: N-myristoyl glycine. Over residues 29–38 (RDRPSIRRGG) the composition is skewed to basic and acidic residues. The tract at residues 29–65 (RDRPSIRRGGELPGSRRGTVEGSVQEVQEEKEAEASA) is disordered. Residue R36 is modified to Omega-N-methylarginine. S43 carries the phosphoserine modification. T47 carries the post-translational modification Phosphothreonine. Residue S51 is modified to Phosphoserine. The segment at 129–190 (NDEMCDVCEV…TGWSCYYCDN (62 aa)) adopts a PHD-type zinc-finger fold. At R307 the chain carries Omega-N-methylarginine.

In Mus musculus (Mouse), this protein is PHD finger protein 24.